Consider the following 492-residue polypeptide: UTP--glucose-1-phosphate uridylyltransferase (492 aa).

Residues L110–G113, K124, Q183, and G210 each bind UTP. A substrate-binding site is contributed by G112 to G113. A Mg(2+)-binding site is contributed by K124. Substrate-binding positions include H211 and N239 to D241. D241 and K379 together coordinate UTP. Mg(2+) is bound at residue D241. K379 is an active-site residue. An oligomerization region spans residues V441 to H492.

It belongs to the UDPGP type 1 family. As to quaternary structure, homooctamer.

It catalyses the reaction alpha-D-glucose 1-phosphate + UTP + H(+) = UDP-alpha-D-glucose + diphosphate. Plays a central role as a glucosyl donor in cellular metabolic pathways. The protein is UTP--glucose-1-phosphate uridylyltransferase (UGP1) of Encephalitozoon cuniculi (strain GB-M1) (Microsporidian parasite).